We begin with the raw amino-acid sequence, 126 residues long: Large ribosomal subunit protein bL12 (126 aa).

It belongs to the bacterial ribosomal protein bL12 family. As to quaternary structure, homodimer. Part of the ribosomal stalk of the 50S ribosomal subunit. Forms a multimeric L10(L12)X complex, where L10 forms an elongated spine to which 2 to 4 L12 dimers bind in a sequential fashion. Binds GTP-bound translation factors.

Its function is as follows. Forms part of the ribosomal stalk which helps the ribosome interact with GTP-bound translation factors. Is thus essential for accurate translation. The polypeptide is Large ribosomal subunit protein bL12 (Chlorobaculum tepidum (strain ATCC 49652 / DSM 12025 / NBRC 103806 / TLS) (Chlorobium tepidum)).